Reading from the N-terminus, the 209-residue chain is Uracil phosphoribosyltransferase (209 aa).

5-phospho-alpha-D-ribose 1-diphosphate contacts are provided by residues R79, R104, and 131–139 (DPMLATGAS). Residues I194 and 199–201 (GDA) each bind uracil. Residue D200 coordinates 5-phospho-alpha-D-ribose 1-diphosphate.

Belongs to the UPRTase family. Mg(2+) is required as a cofactor.

It catalyses the reaction UMP + diphosphate = 5-phospho-alpha-D-ribose 1-diphosphate + uracil. Its pathway is pyrimidine metabolism; UMP biosynthesis via salvage pathway; UMP from uracil: step 1/1. Allosterically activated by GTP. In terms of biological role, catalyzes the conversion of uracil and 5-phospho-alpha-D-ribose 1-diphosphate (PRPP) to UMP and diphosphate. The polypeptide is Uracil phosphoribosyltransferase (Staphylococcus haemolyticus (strain JCSC1435)).